A 664-amino-acid chain; its full sequence is L-type lectin-domain containing receptor kinase I.3 (664 aa).

Residues 1–21 (MACRLYLALIFSCVYLICLSS) form the signal peptide. At 22–286 (QQETGFVYNG…PKEEKKKLSP (265 aa)) the chain is on the extracellular side. The legume-lectin like stretch occupies residues 24 to 257 (ETGFVYNGFE…NHYILGWSFS (234 aa)). N-linked (GlcNAc...) asparagine glycosylation is found at Asn55, Asn125, Asn128, Asn181, Asn204, Asn225, and Asn267. Residues 287–307 (LLIGLVILLVIPVVMVLGGVY) traverse the membrane as a helical segment. At 308 to 664 (WYRRKKYAEV…THTILDGHGR (357 aa)) the chain is on the cytoplasmic side. The 278-residue stretch at 342-619 (FRKDCRVGKG…LNQDLPLPIF (278 aa)) folds into the Protein kinase domain. ATP is bound by residues 348–356 (VGKGGFGEV) and Lys370. The active-site Proton acceptor is the Asp466.

The protein in the C-terminal section; belongs to the protein kinase superfamily. Ser/Thr protein kinase family. It in the N-terminal section; belongs to the leguminous lectin family. Autophosphorylated on Ser and Thr residues. Mostly expressed in roots and flowers, and, to a lower extent, in leaves.

The protein resides in the cell membrane. The enzyme catalyses L-seryl-[protein] + ATP = O-phospho-L-seryl-[protein] + ADP + H(+). It carries out the reaction L-threonyl-[protein] + ATP = O-phospho-L-threonyl-[protein] + ADP + H(+). Its function is as follows. Involved in resistance response to the pathogenic fungus Alternaria brassicicola. In Arabidopsis thaliana (Mouse-ear cress), this protein is L-type lectin-domain containing receptor kinase I.3.